A 278-amino-acid chain; its full sequence is Methyltransferase adrK (278 aa).

S-adenosyl-L-methionine is bound by residues 124 to 125 (DL), 151 to 152 (DV), and 152 to 153 (VL).

It belongs to the class I-like SAM-binding methyltransferase superfamily. Homodimer.

It participates in secondary metabolite biosynthesis; terpenoid biosynthesis. Its function is as follows. Methyltransferase; part of the gene cluster that mediates the biosynthesis of andrastins, meroterpenoid compounds that exhibit inhibitory activity against ras farnesyltransferase, suggesting that they could be promising leads for antitumor agents. The first step of the pathway is the synthesis of 3,5-dimethylorsellinic acid (DMOA) by the polyketide synthase adrD via condensation of one acetyl-CoA starter unit with 3 malonyl-CoA units and 2 methylations. DMAO is then converted to farnesyl-DMAO by the prenyltransferase adrG. The methyltransferase adrK catalyzes the methylation of the carboxyl group of farnesyl-DMAO to farnesyl-DMAO methyl ester which is further converted to epoxyfarnesyl-DMAO methyl ester by the FAD-dependent monooxygenase adrH. The terpene cyclase adrI then catalyzes the carbon skeletal rearrangement to generate the andrastin E, the first compound in the pathway having the andrastin scaffold, with the tetracyclic ring system. The post-cyclization tailoring enzymes adrF, adrE, adrJ, and adrA, are involved in the conversion of andrastin E into andrastin A. The short chain dehydrogenase adrF is responsible for the oxidation of the C-3 a hydroxyl group of andrastin E to yield the corresponding ketone, andrastin D. The ketoreductase adrE stereoselectively reduces the carbonyl moiety to reverse the stereochemistry of the C-3 position to yield andrastin F. The acetyltransferase adrJ is the acetyltransferase that attaches the acetyl group to the C-3 hydroxyl group of andrastin F to yield andrastin C. Finally, the cytochrome P450 monooxygenase adrA catalyzes two sequential oxidation reactions of the C-23 methyl group, to generate the corresponding alcohol andrastin B, and aldehyde andrastin A. The protein is Methyltransferase adrK of Penicillium roqueforti.